Reading from the N-terminus, the 526-residue chain is Lysine--tRNA ligase (526 aa).

Glu431 and Glu438 together coordinate Mg(2+).

This sequence belongs to the class-II aminoacyl-tRNA synthetase family. Homodimer. It depends on Mg(2+) as a cofactor.

It is found in the cytoplasm. It catalyses the reaction tRNA(Lys) + L-lysine + ATP = L-lysyl-tRNA(Lys) + AMP + diphosphate. This Chlamydia trachomatis serovar L2b (strain UCH-1/proctitis) protein is Lysine--tRNA ligase.